Reading from the N-terminus, the 106-residue chain is MRGNIAQLMQQAQKMQENLQRAQEELAKLEVTGSAGGSMVSVILSGTKECRKVRIDPSILNDQEMIEDLIAAAFNDASNKVDAESKERMGSATLGMSLPPGFKLPF.

This sequence belongs to the YbaB/EbfC family. In terms of assembly, homodimer.

The protein resides in the cytoplasm. It localises to the nucleoid. Its function is as follows. Binds to DNA and alters its conformation. May be involved in regulation of gene expression, nucleoid organization and DNA protection. This chain is Nucleoid-associated protein PD_1058, found in Xylella fastidiosa (strain Temecula1 / ATCC 700964).